A 167-amino-acid chain; its full sequence is NADH-ubiquinone oxidoreductase chain 6 (167 aa).

Transmembrane regions (helical) follow at residues 1–21, 23–43, 47–67, 86–106, and 133–153; these read MVLMVVFSVMFLISLIAVASN, SPYFAAFGLMVGAGVGCGMLM, MTFLSMILFLIYLGGMLVVFA, VFSYVLVYMFLVIVAWVAFVG, and AGGYMLFIAGWVLLMALLVVL.

The protein belongs to the complex I subunit 6 family.

Its subcellular location is the mitochondrion membrane. It catalyses the reaction a ubiquinone + NADH + 5 H(+)(in) = a ubiquinol + NAD(+) + 4 H(+)(out). Functionally, core subunit of the mitochondrial membrane respiratory chain NADH dehydrogenase (Complex I) that is believed to belong to the minimal assembly required for catalysis. Complex I functions in the transfer of electrons from NADH to the respiratory chain. The immediate electron acceptor for the enzyme is believed to be ubiquinone. The chain is NADH-ubiquinone oxidoreductase chain 6 (MT-ND6) from Polypterus ornatipinnis (Ornate bichir).